Here is a 99-residue protein sequence, read N- to C-terminus: Nucleoid-associated protein SpyM3_1606 (99 aa).

The protein belongs to the YbaB/EbfC family. Homodimer.

Its subcellular location is the cytoplasm. The protein localises to the nucleoid. Functionally, binds to DNA and alters its conformation. May be involved in regulation of gene expression, nucleoid organization and DNA protection. The polypeptide is Nucleoid-associated protein SpyM3_1606 (Streptococcus pyogenes serotype M3 (strain ATCC BAA-595 / MGAS315)).